Here is a 214-residue protein sequence, read N- to C-terminus: tRNA (guanine-N(7)-)-methyltransferase (214 aa).

The S-adenosyl-L-methionine site is built by Glu45, Asp70, Asn97, and Asn119. Lys123 contributes to the substrate binding site. Residues 125–130 form an interaction with RNA region; it reads RHNKRR. Residues Asp155 and 193-196 each bind substrate; that span reads TEYE.

It belongs to the class I-like SAM-binding methyltransferase superfamily. TrmB family.

It carries out the reaction guanosine(46) in tRNA + S-adenosyl-L-methionine = N(7)-methylguanosine(46) in tRNA + S-adenosyl-L-homocysteine. It functions in the pathway tRNA modification; N(7)-methylguanine-tRNA biosynthesis. Its function is as follows. Catalyzes the formation of N(7)-methylguanine at position 46 (m7G46) in tRNA. In Clostridium novyi (strain NT), this protein is tRNA (guanine-N(7)-)-methyltransferase.